The sequence spans 320 residues: Malate dehydrogenase (320 aa).

Residues 10–15 (GAGQIG) and aspartate 34 contribute to the NAD(+) site. Positions 83 and 89 each coordinate substrate. NAD(+) contacts are provided by residues asparagine 96 and 119–121 (ITN). Residues asparagine 121 and arginine 152 each coordinate substrate. Residue histidine 176 is the Proton acceptor of the active site.

Belongs to the LDH/MDH superfamily. MDH type 3 family.

The catalysed reaction is (S)-malate + NAD(+) = oxaloacetate + NADH + H(+). Functionally, catalyzes the reversible oxidation of malate to oxaloacetate. This chain is Malate dehydrogenase, found in Ruegeria pomeroyi (strain ATCC 700808 / DSM 15171 / DSS-3) (Silicibacter pomeroyi).